Here is a 98-residue protein sequence, read N- to C-terminus: MLSRLQELRKEEETLLRLKAALHDQLNRLKVEELALQSMISSRREGEMLPSQPAPEPSHDMLVHVDNEASINQTALELSTRSHVQEEEEEEEEEEEDS.

The interval 75–98 (ALELSTRSHVQEEEEEEEEEEEDS) is disordered. A compositionally biased stretch (acidic residues) spans 86–98 (EEEEEEEEEEEDS).

In terms of assembly, part of the SNAPc complex composed of 5 subunits: SNAPC1, SNAPC2, SNAPC3, SNAPC4 and SNAPC5. SNAPC5 interacts with SNAPC4.

It localises to the nucleus. Its function is as follows. Part of the SNAPc complex required for the transcription of both RNA polymerase II and III small-nuclear RNA genes. Binds to the proximal sequence element (PSE), a non-TATA-box basal promoter element common to these 2 types of genes. Recruits TBP and BRF2 to the U6 snRNA TATA box. The polypeptide is snRNA-activating protein complex subunit 5 (SNAPC5) (Bos taurus (Bovine)).